A 732-amino-acid chain; its full sequence is Conidiogenone synthase (732 aa).

The segment at 1-311 is terpene cyclase; it reads MADKITDEYA…SLCVPRYCKV (311 aa). Aspartate 97 lines the Mg(2+) pocket. Residues aspartate 97, 169–172, asparagine 213, 217–221, and 307–308 contribute to the substrate site; these read RIVD, SWDKE, and RY. Positions 97-101 match the DDXXD 1 motif; the sequence is DALNQ. An NSE/DTE motif is present at residues 213–221; sequence NDLFSWDKE. Positions 312 to 732 are prenyltransferase; the sequence is DRNPYKDHLE…LRAMEETLQK (421 aa). Residues 348-370 are disordered; sequence KQSELKDPSSSTYKSHFSPLEPN. Residues lysine 402, arginine 405, and histidine 434 each coordinate isopentenyl diphosphate. Positions 441 and 445 each coordinate Mg(2+). The DDXXD 2 signature appears at 441–445; that stretch reads DDIQD. Arginine 450 contributes to the dimethylallyl diphosphate binding site. Arginine 451 serves as a coordination point for isopentenyl diphosphate. Positions 529, 530, 565, 572, 582, and 592 each coordinate dimethylallyl diphosphate.

In the N-terminal section; belongs to the terpene synthase family. This sequence in the C-terminal section; belongs to the FPP/GGPP synthase family. In terms of assembly, hexamer. Mg(2+) is required as a cofactor.

The catalysed reaction is isopentenyl diphosphate + (2E,6E)-farnesyl diphosphate = (2E,6E,10E)-geranylgeranyl diphosphate + diphosphate. Its pathway is secondary metabolite biosynthesis; terpenoid biosynthesis. In terms of biological role, bifunctional terpene synthase; part of the gene cluster that mediates the biosynthesis of conidiogenone, a diterpene known to induce the conidiation. The bifunctional terpene synthase PchDS converts isopentenyl diphosphate (IPP) and dimethylallyl diphosphate (DMAPP) into deoxyconidiogenol. The C-terminal prenyltransferase (PT) domain of PchDS catalyzes formation of GGPP, whereas the N-terminal terpene cyclase (TC) domain catalyzes the cyclization of GGPP into deoxyconidiogenol. The cytochrome P450 monooxygenase PchP450 then catalyzes two rounds of oxidation to furnish conidiogenone. This chain is Conidiogenone synthase, found in Penicillium rubens (strain ATCC 28089 / DSM 1075 / NRRL 1951 / Wisconsin 54-1255) (Penicillium chrysogenum).